Consider the following 337-residue polypeptide: Casein kinase I isoform alpha-like (337 aa).

Position 8 is an N6-acetyllysine (K8). The region spanning 17–285 is the Protein kinase domain; the sequence is YKLVRKIGSG…YLRQLFRILF (269 aa). Residues 23-31 and K46 contribute to the ATP site; that span reads IGSGSFGDV. D136 functions as the Proton acceptor in the catalytic mechanism. The span at 309-325 shows a compositional bias: low complexity; that stretch reads AASSSGQGQQAQTQTGK. The interval 309-337 is disordered; sequence AASSSGQGQQAQTQTGKQTEKNKNNVKDN. The span at 326–337 shows a compositional bias: basic and acidic residues; sequence QTEKNKNNVKDN.

It belongs to the protein kinase superfamily. CK1 Ser/Thr protein kinase family. Casein kinase I subfamily. Interacts with FAM83A, FAM83B, FAM83C, FAM83D, FAM83E, FAM83F, FAM83G and FAM83H (via DUF1669).

Its subcellular location is the cytoplasm. The enzyme catalyses L-seryl-[protein] + ATP = O-phospho-L-seryl-[protein] + ADP + H(+). The catalysed reaction is L-threonyl-[protein] + ATP = O-phospho-L-threonyl-[protein] + ADP + H(+). Functionally, casein kinases are operationally defined by their preferential utilization of acidic proteins such as caseins as substrates. It can phosphorylate a large number of proteins. Participates in Wnt signaling. This chain is Casein kinase I isoform alpha-like (CSNK1A1L), found in Homo sapiens (Human).